Consider the following 348-residue polypeptide: Dihydroorotase (348 aa).

Zn(2+) is bound by residues His-17 and His-19. Residues 19-21 (HLR) and Asn-45 contribute to the substrate site. Zn(2+) contacts are provided by Lys-103, His-140, and His-178. Lys-103 carries the post-translational modification N6-carboxylysine. His-140 provides a ligand contact to substrate. A substrate-binding site is contributed by Leu-223. Asp-251 serves as a coordination point for Zn(2+). Asp-251 is a catalytic residue. Substrate is bound by residues His-255 and Ala-267.

The protein belongs to the metallo-dependent hydrolases superfamily. DHOase family. Class II DHOase subfamily. Homodimer. It depends on Zn(2+) as a cofactor.

It catalyses the reaction (S)-dihydroorotate + H2O = N-carbamoyl-L-aspartate + H(+). Its pathway is pyrimidine metabolism; UMP biosynthesis via de novo pathway; (S)-dihydroorotate from bicarbonate: step 3/3. Catalyzes the reversible cyclization of carbamoyl aspartate to dihydroorotate. This is Dihydroorotase from Shigella boydii serotype 4 (strain Sb227).